The primary structure comprises 250 residues: Small ribosomal subunit protein uS2 (250 aa).

The tract at residues G225 to A250 is disordered.

Belongs to the universal ribosomal protein uS2 family.

The chain is Small ribosomal subunit protein uS2 from Rhizorhabdus wittichii (strain DSM 6014 / CCUG 31198 / JCM 15750 / NBRC 105917 / EY 4224 / RW1) (Sphingomonas wittichii).